The chain runs to 748 residues: WD repeat-containing protein 91 (748 aa).

Residues 183-228 are a coiled coil; that stretch reads QRTNQVQEENEVLRQKLFALQAEIHRLKKEEQQQEEEAAALVQHKL. Ser-257 is subject to Phosphoserine. Positions 266 to 279 are enriched in low complexity; it reads LLPQSKKSPSRLSP. The disordered stretch occupies residues 266–368; it reads LLPQSKKSPS…PEVSGAEAEP (103 aa). Polar residues predominate over residues 284–300; it reads PQAQSSAKKDSFSSQAT. A phosphoserine mark is found at Ser-289 and Ser-294. Residues 333–344 are compositionally biased toward basic and acidic residues; that stretch reads RLQDHGKERREL. The segment covering 345–354 has biased composition (polar residues); it reads LSTSSSQSQC. WD repeat units lie at residues 407 to 446, 449 to 489, 512 to 556, 561 to 600, 603 to 642, 665 to 703, and 710 to 748; these read EHHS…QTKA, ISKS…NLCE, VCSA…QQLQ, PEPI…CAMS, AHCG…LKVS, VQVP…KVLE, and GHRA…AHKL.

It belongs to the WD repeat WDR91 family. Interacts with WDR81; involved in early to late endosome cargo transport. Interacts with BECN1; negatively regulates the PI3 kinase/PI3K activity associated with endosomal membranes.

Its subcellular location is the early endosome membrane. It is found in the late endosome membrane. Functions as a negative regulator of the PI3 kinase/PI3K activity associated with endosomal membranes via BECN1, a core subunit of the PI3K complex. By modifying the phosphatidylinositol 3-phosphate/PtdInsP3 content of endosomal membranes may regulate endosome fusion, recycling, sorting and early to late endosome transport. It is for instance, required for the delivery of cargos like BST2/tetherin from early to late endosome and thereby participates indirectly to their degradation by the lysosome. May play a role in meiosis. The chain is WD repeat-containing protein 91 from Mus musculus (Mouse).